The primary structure comprises 333 residues: Global transcription regulator sge1 (333 aa).

Disordered stretches follow at residues 93–139 and 241–307; these read PPGE…PSVP and QHQS…PQYQ.

It belongs to the MIT1/WOR1 family.

The protein localises to the nucleus. Functionally, global transcriptional regulator that acts as an activator of secondary metabolism. Required for expression of a yet uncharacterized secondary metabolism gene cluster containing a non-canonical non-ribosomal peptide synthetase. Not required for conidiogenesis nor for pathogenicity, but is involved in vegetative growth. The sequence is that of Global transcription regulator sge1 from Gibberella fujikuroi (strain CBS 195.34 / IMI 58289 / NRRL A-6831) (Bakanae and foot rot disease fungus).